Consider the following 377-residue polypeptide: Queuine tRNA-ribosyltransferase (377 aa).

The active-site Proton acceptor is the Asp91. Substrate contacts are provided by residues 91–95 (DSGGF), Asp145, Gln189, and Gly216. Residues 247–253 (GVGKPED) form an RNA binding region. Asp266 functions as the Nucleophile in the catalytic mechanism. Positions 271 to 275 (TRNAR) are RNA binding; important for wobble base 34 recognition. Cys304, Cys306, Cys309, and His335 together coordinate Zn(2+).

The protein belongs to the queuine tRNA-ribosyltransferase family. Homodimer. Within each dimer, one monomer is responsible for RNA recognition and catalysis, while the other monomer binds to the replacement base PreQ1. The cofactor is Zn(2+).

It catalyses the reaction 7-aminomethyl-7-carbaguanine + guanosine(34) in tRNA = 7-aminomethyl-7-carbaguanosine(34) in tRNA + guanine. It participates in tRNA modification; tRNA-queuosine biosynthesis. Its function is as follows. Catalyzes the base-exchange of a guanine (G) residue with the queuine precursor 7-aminomethyl-7-deazaguanine (PreQ1) at position 34 (anticodon wobble position) in tRNAs with GU(N) anticodons (tRNA-Asp, -Asn, -His and -Tyr). Catalysis occurs through a double-displacement mechanism. The nucleophile active site attacks the C1' of nucleotide 34 to detach the guanine base from the RNA, forming a covalent enzyme-RNA intermediate. The proton acceptor active site deprotonates the incoming PreQ1, allowing a nucleophilic attack on the C1' of the ribose to form the product. After dissociation, two additional enzymatic reactions on the tRNA convert PreQ1 to queuine (Q), resulting in the hypermodified nucleoside queuosine (7-(((4,5-cis-dihydroxy-2-cyclopenten-1-yl)amino)methyl)-7-deazaguanosine). This is Queuine tRNA-ribosyltransferase from Vibrio parahaemolyticus serotype O3:K6 (strain RIMD 2210633).